Here is a 411-residue protein sequence, read N- to C-terminus: MSGINKIVLAYSGGLDTSAIIPWLKENYDAEIIAFVADVGQERDDLEGIEQKAIASGATKCIVKDLREEFVKEYVYPTLKTGAVYEGTYLLGTSMARPVIAKAMVEAALAEGADAISHGCTGKGNDQVRFEGAVAALAPQLKVIAPWRLWDMRSREDLLAYLETRNIPCKATLKKIYSRDANAWHISTEGGELESTWNEPSEAVWQWTVPAEQAPDQPEYVKLTVAQGEVVAVDDQPLSPHQILTTLNERAGKHGVGRIDITENRMVGMKSRGCYETPGGTVMVAALRAVEELVLDRPTRAWREKLGAEFSHLVYDGRWFTPLCKAIVASANAIAEDLDGEVVLKMYKGQVTAVQKKSPNSLYSEDFATFGADEVYDQSHAEGFIRLYTLASRIRAMKEQHQAIGGDHTHG.

Residues 10–18 (AYSGGLDTS) and Ala-37 each bind ATP. 2 residues coordinate L-citrulline: Tyr-89 and Ser-94. Gly-119 provides a ligand contact to ATP. The L-aspartate site is built by Thr-121, Asn-125, and Asp-126. Position 125 (Asn-125) interacts with L-citrulline. Residues Arg-129, Ser-178, Ser-187, Glu-263, and Tyr-275 each contribute to the L-citrulline site.

It belongs to the argininosuccinate synthase family. Type 1 subfamily. In terms of assembly, homotetramer.

Its subcellular location is the cytoplasm. The enzyme catalyses L-citrulline + L-aspartate + ATP = 2-(N(omega)-L-arginino)succinate + AMP + diphosphate + H(+). The protein operates within amino-acid biosynthesis; L-arginine biosynthesis; L-arginine from L-ornithine and carbamoyl phosphate: step 2/3. This chain is Argininosuccinate synthase, found in Aeromonas hydrophila subsp. hydrophila (strain ATCC 7966 / DSM 30187 / BCRC 13018 / CCUG 14551 / JCM 1027 / KCTC 2358 / NCIMB 9240 / NCTC 8049).